Here is a 184-residue protein sequence, read N- to C-terminus: 2-C-methyl-D-erythritol 2,4-cyclodiphosphate synthase (184 aa).

Positions 17 and 19 each coordinate a divalent metal cation. 4-CDP-2-C-methyl-D-erythritol 2-phosphate-binding positions include 17-19 and 47-48; these read DVH and HS. Residue His-55 coordinates a divalent metal cation. 4-CDP-2-C-methyl-D-erythritol 2-phosphate contacts are provided by residues 74–78, Phe-152, and Arg-155; that span reads FPNTD.

The protein belongs to the IspF family. As to quaternary structure, homotrimer. A divalent metal cation is required as a cofactor.

It carries out the reaction 4-CDP-2-C-methyl-D-erythritol 2-phosphate = 2-C-methyl-D-erythritol 2,4-cyclic diphosphate + CMP. Its pathway is isoprenoid biosynthesis; isopentenyl diphosphate biosynthesis via DXP pathway; isopentenyl diphosphate from 1-deoxy-D-xylulose 5-phosphate: step 4/6. In terms of biological role, involved in the biosynthesis of isopentenyl diphosphate (IPP) and dimethylallyl diphosphate (DMAPP), two major building blocks of isoprenoid compounds. Catalyzes the conversion of 4-diphosphocytidyl-2-C-methyl-D-erythritol 2-phosphate (CDP-ME2P) to 2-C-methyl-D-erythritol 2,4-cyclodiphosphate (ME-CPP) with a corresponding release of cytidine 5-monophosphate (CMP). This Anaplasma marginale (strain St. Maries) protein is 2-C-methyl-D-erythritol 2,4-cyclodiphosphate synthase.